Reading from the N-terminus, the 215-residue chain is Orotate phosphoribosyltransferase (215 aa).

Lysine 26 is a binding site for 5-phospho-alpha-D-ribose 1-diphosphate. Phenylalanine 34–phenylalanine 35 is a binding site for orotate. 5-phospho-alpha-D-ribose 1-diphosphate-binding positions include tyrosine 72 to lysine 73, arginine 99, lysine 100, lysine 103, histidine 105, and aspartate 124 to alanine 132. Threonine 128 and arginine 156 together coordinate orotate.

The protein belongs to the purine/pyrimidine phosphoribosyltransferase family. PyrE subfamily. In terms of assembly, homodimer. Mg(2+) serves as cofactor.

It catalyses the reaction orotidine 5'-phosphate + diphosphate = orotate + 5-phospho-alpha-D-ribose 1-diphosphate. It functions in the pathway pyrimidine metabolism; UMP biosynthesis via de novo pathway; UMP from orotate: step 1/2. In terms of biological role, catalyzes the transfer of a ribosyl phosphate group from 5-phosphoribose 1-diphosphate to orotate, leading to the formation of orotidine monophosphate (OMP). The polypeptide is Orotate phosphoribosyltransferase (Hahella chejuensis (strain KCTC 2396)).